Consider the following 209-residue polypeptide: Probable GTP-binding protein EngB (209 aa).

An EngB-type G domain is found at 22-198 (TPLEIAFVGR…NRTVGSWLDA (177 aa)). Mg(2+) is bound by residues Ser-37 and Thr-59.

The protein belongs to the TRAFAC class TrmE-Era-EngA-EngB-Septin-like GTPase superfamily. EngB GTPase family. Requires Mg(2+) as cofactor.

In terms of biological role, necessary for normal cell division and for the maintenance of normal septation. In Neisseria meningitidis serogroup B (strain ATCC BAA-335 / MC58), this protein is Probable GTP-binding protein EngB.